We begin with the raw amino-acid sequence, 211 residues long: N-(5'-phosphoribosyl)anthranilate isomerase (211 aa).

The protein belongs to the TrpF family.

The enzyme catalyses N-(5-phospho-beta-D-ribosyl)anthranilate = 1-(2-carboxyphenylamino)-1-deoxy-D-ribulose 5-phosphate. It functions in the pathway amino-acid biosynthesis; L-tryptophan biosynthesis; L-tryptophan from chorismate: step 3/5. This Pseudomonas paraeruginosa (strain DSM 24068 / PA7) (Pseudomonas aeruginosa (strain PA7)) protein is N-(5'-phosphoribosyl)anthranilate isomerase.